We begin with the raw amino-acid sequence, 204 residues long: ATP phosphoribosyltransferase (204 aa).

This sequence belongs to the ATP phosphoribosyltransferase family. Short subfamily. In terms of assembly, heteromultimer composed of HisG and HisZ subunits.

The protein localises to the cytoplasm. The enzyme catalyses 1-(5-phospho-beta-D-ribosyl)-ATP + diphosphate = 5-phospho-alpha-D-ribose 1-diphosphate + ATP. It participates in amino-acid biosynthesis; L-histidine biosynthesis; L-histidine from 5-phospho-alpha-D-ribose 1-diphosphate: step 1/9. Its function is as follows. Catalyzes the condensation of ATP and 5-phosphoribose 1-diphosphate to form N'-(5'-phosphoribosyl)-ATP (PR-ATP). Has a crucial role in the pathway because the rate of histidine biosynthesis seems to be controlled primarily by regulation of HisG enzymatic activity. The protein is ATP phosphoribosyltransferase of Staphylococcus aureus (strain USA300).